The primary structure comprises 447 residues: NADH-ubiquinone oxidoreductase chain 4 (447 aa).

Transmembrane regions (helical) follow at residues 28–48 (IFLATCLFMIKISSNYYFCDI), 56–76 (MISYGLILLSFWICGLMLMAS), 85–105 (YVNLFLFMIVFLLLMLIFTFS), 110–130 (FMFYLFFESSLIPTLFLILGW), 141–161 (IYLLFYTLLASLPLLIGIFYI), 183–203 (FLYLCMIFAFLVKMPMFLVHL), 213–233 (PVSGSMILAGVLLKLGGYGLL), 246–266 (FNYIWISISLIGGVLVSLICL), 273–293 (ALIAYSSVAHMGIVLSGLMTM), 301–321 (SYTLMIAHGLCSSGLFCLANI), 343–365 (SLSLWWFLLCSGNMAAPPTLNLL), 380–400 (LTMISLAFLSFFSAAYTLYLF), and 409–431 (YSGVYFFSSGTTREFLVLMLHWL).

The protein belongs to the complex I subunit 4 family.

The protein localises to the mitochondrion membrane. The catalysed reaction is a ubiquinone + NADH + 5 H(+)(in) = a ubiquinol + NAD(+) + 4 H(+)(out). In terms of biological role, core subunit of the mitochondrial membrane respiratory chain NADH dehydrogenase (Complex I) that is believed to belong to the minimal assembly required for catalysis. Complex I functions in the transfer of electrons from NADH to the respiratory chain. The immediate electron acceptor for the enzyme is believed to be ubiquinone. The chain is NADH-ubiquinone oxidoreductase chain 4 from Aedes aegypti (Yellowfever mosquito).